Here is a 176-residue protein sequence, read N- to C-terminus: ATP synthase subunit delta (176 aa).

This sequence belongs to the ATPase delta chain family. F-type ATPases have 2 components, F(1) - the catalytic core - and F(0) - the membrane proton channel. F(1) has five subunits: alpha(3), beta(3), gamma(1), delta(1), epsilon(1). F(0) has three main subunits: a(1), b(2) and c(10-14). The alpha and beta chains form an alternating ring which encloses part of the gamma chain. F(1) is attached to F(0) by a central stalk formed by the gamma and epsilon chains, while a peripheral stalk is formed by the delta and b chains.

Its subcellular location is the cell inner membrane. Functionally, f(1)F(0) ATP synthase produces ATP from ADP in the presence of a proton or sodium gradient. F-type ATPases consist of two structural domains, F(1) containing the extramembraneous catalytic core and F(0) containing the membrane proton channel, linked together by a central stalk and a peripheral stalk. During catalysis, ATP synthesis in the catalytic domain of F(1) is coupled via a rotary mechanism of the central stalk subunits to proton translocation. In terms of biological role, this protein is part of the stalk that links CF(0) to CF(1). It either transmits conformational changes from CF(0) to CF(1) or is implicated in proton conduction. This is ATP synthase subunit delta from Wolinella succinogenes (strain ATCC 29543 / DSM 1740 / CCUG 13145 / JCM 31913 / LMG 7466 / NCTC 11488 / FDC 602W) (Vibrio succinogenes).